The sequence spans 143 residues: Ribosomal RNA large subunit methyltransferase H (143 aa).

Residues G95 and 111–116 (FSDLTF) each bind S-adenosyl-L-methionine.

Belongs to the RNA methyltransferase RlmH family. As to quaternary structure, homodimer.

It localises to the cytoplasm. The catalysed reaction is pseudouridine(1915) in 23S rRNA + S-adenosyl-L-methionine = N(3)-methylpseudouridine(1915) in 23S rRNA + S-adenosyl-L-homocysteine + H(+). In terms of biological role, specifically methylates the pseudouridine at position 1915 (m3Psi1915) in 23S rRNA. The sequence is that of Ribosomal RNA large subunit methyltransferase H from Metamycoplasma arthritidis (strain 158L3-1) (Mycoplasma arthritidis).